The primary structure comprises 72 residues: Protein SlyX homolog (72 aa).

It belongs to the SlyX family.

In Bradyrhizobium diazoefficiens (strain JCM 10833 / BCRC 13528 / IAM 13628 / NBRC 14792 / USDA 110), this protein is Protein SlyX homolog.